Here is a 446-residue protein sequence, read N- to C-terminus: Sorting nexin-30 (446 aa).

Positions 1–18 (MSGSSTPKSLPTSGQQSL) are enriched in polar residues. The disordered stretch occupies residues 1 to 84 (MSGSSTPKSL…SSPASSSSLL (84 aa)). A compositionally biased stretch (low complexity) spans 70–84 (TPADTSSPASSSSLL). The PX domain maps to 98 to 219 (RDLFVTVDDP…VFLTAKDLNS (122 aa)). A 1,2-diacyl-sn-glycero-3-phospho-(1D-myo-inositol-3-phosphate) is bound by residues arginine 141, glutamine 143, lysine 171, and arginine 185. The BAR domain occupies 243–446 (KLRNRPVEFA…PLLQDKQEPK (204 aa)).

It belongs to the sorting nexin family.

Its subcellular location is the early endosome membrane. Its function is as follows. Involved in the regulation of endocytosis and in several stages of intracellular trafficking. Together with snx4, involved in autophagosome assembly. The sequence is that of Sorting nexin-30 (snx30) from Xenopus tropicalis (Western clawed frog).